The following is a 145-amino-acid chain: Lipoprotein signal peptidase (145 aa).

2 consecutive transmembrane segments (helical) span residues 57 to 77 and 79 to 99; these read LFFIVITVVVGIVLIYSMIKL and ENSLYNYTLAMILGGAIGNLI. Residues Asp-109 and Asp-124 contribute to the active site. A helical transmembrane segment spans residues 120–140; that stretch reads FNVADSFIVVGAIILGYLMIF.

It belongs to the peptidase A8 family.

The protein resides in the cell membrane. The enzyme catalyses Release of signal peptides from bacterial membrane prolipoproteins. Hydrolyzes -Xaa-Yaa-Zaa-|-(S,diacylglyceryl)Cys-, in which Xaa is hydrophobic (preferably Leu), and Yaa (Ala or Ser) and Zaa (Gly or Ala) have small, neutral side chains.. Its pathway is protein modification; lipoprotein biosynthesis (signal peptide cleavage). In terms of biological role, this protein specifically catalyzes the removal of signal peptides from prolipoproteins. The sequence is that of Lipoprotein signal peptidase from Caldanaerobacter subterraneus subsp. tengcongensis (strain DSM 15242 / JCM 11007 / NBRC 100824 / MB4) (Thermoanaerobacter tengcongensis).